A 397-amino-acid polypeptide reads, in one-letter code: Thioredoxin-interacting protein (397 aa).

Lysine 213 is covalently cross-linked (Glycyl lysine isopeptide (Lys-Gly) (interchain with G-Cter in ubiquitin)). The residue at position 362 (serine 362) is a Phosphoserine.

Belongs to the arrestin family. In terms of assembly, homodimer; disulfide-linked. Interacts with TXN/thioredoxin through its redox-active site. Interacts with transcriptional repressors ZBTB16, ZBTB32 and HDAC1. Interacts with DDIT4. In terms of processing, ubiquitinated; undergoes heterotypic 'Lys-48'-/'Lys-63'-branched polyubiquitination catalyzed by ITCH and UBR5 resulting in proteasomal degradation. Deubiquitinated by USP5, leading to TXNIP stabilization. Ubiquitously expressed.

It is found in the cytoplasm. Its function is as follows. May act as an oxidative stress mediator by inhibiting thioredoxin activity or by limiting its bioavailability. Interacts with COPS5 and restores COPS5-induced suppression of CDKN1B stability, blocking the COPS5-mediated translocation of CDKN1B from the nucleus to the cytoplasm. Functions as a transcriptional repressor, possibly by acting as a bridge molecule between transcription factors and corepressor complexes, and over-expression will induce G0/G1 cell cycle arrest. Required for the maturation of natural killer cells. Acts as a suppressor of tumor cell growth. Inhibits the proteasomal degradation of DDIT4, and thereby contributes to the inhibition of the mammalian target of rapamycin complex 1 (mTORC1). The chain is Thioredoxin-interacting protein (Txnip) from Mus musculus (Mouse).